Reading from the N-terminus, the 770-residue chain is PH and SEC7 domain-containing protein 2 (770 aa).

Basic and acidic residues predominate over residues M1 to E24. Disordered stretches follow at residues M1–D65 and I181–C304. Positions Q32–I45 are enriched in polar residues. S188 carries the phosphoserine modification. Low complexity-rich tracts occupy residues L216–S234 and E285–S296. Residues D256 to E459 enclose the SEC7 domain. In terms of domain architecture, PH spans T509–A622. A helical transmembrane segment spans residues L619–M636. Residues R650 to H677 adopt a coiled-coil conformation. Positions P738–T770 are disordered.

The protein belongs to the PSD family.

It is found in the cell membrane. Its subcellular location is the cell projection. The protein resides in the ruffle membrane. The protein localises to the cleavage furrow. This chain is PH and SEC7 domain-containing protein 2 (Psd2), found in Mus musculus (Mouse).